A 38-amino-acid chain; its full sequence is Large ribosomal subunit protein bL36 (38 aa).

The protein belongs to the bacterial ribosomal protein bL36 family.

The protein is Large ribosomal subunit protein bL36 of Fervidobacterium nodosum (strain ATCC 35602 / DSM 5306 / Rt17-B1).